Consider the following 434-residue polypeptide: Serine--tRNA ligase (434 aa).

239-241 is a binding site for L-serine; the sequence is TAE. Residue 270–272 coordinates ATP; sequence RSE. Glu293 is a binding site for L-serine. 357-360 lines the ATP pocket; the sequence is EISS. Ser392 provides a ligand contact to L-serine.

Belongs to the class-II aminoacyl-tRNA synthetase family. Type-1 seryl-tRNA synthetase subfamily. Homodimer. The tRNA molecule binds across the dimer.

It is found in the cytoplasm. The catalysed reaction is tRNA(Ser) + L-serine + ATP = L-seryl-tRNA(Ser) + AMP + diphosphate + H(+). The enzyme catalyses tRNA(Sec) + L-serine + ATP = L-seryl-tRNA(Sec) + AMP + diphosphate + H(+). Its pathway is aminoacyl-tRNA biosynthesis; selenocysteinyl-tRNA(Sec) biosynthesis; L-seryl-tRNA(Sec) from L-serine and tRNA(Sec): step 1/1. Functionally, catalyzes the attachment of serine to tRNA(Ser). Is also able to aminoacylate tRNA(Sec) with serine, to form the misacylated tRNA L-seryl-tRNA(Sec), which will be further converted into selenocysteinyl-tRNA(Sec). This is Serine--tRNA ligase from Cupriavidus necator (strain ATCC 17699 / DSM 428 / KCTC 22496 / NCIMB 10442 / H16 / Stanier 337) (Ralstonia eutropha).